A 389-amino-acid chain; its full sequence is Mitochondrial tRNA-specific 2-thiouridylase 1 (389 aa).

Residues 8 to 15 and Met-34 each bind ATP; that span reads GVSGGVDS. The interaction with target base in tRNA stretch occupies residues 94–96; that stretch reads NPD. Catalysis depends on Cys-99, which acts as the Nucleophile. Cys-99 and Cys-205 are disulfide-bonded. Gly-124 is a binding site for ATP. The segment at 154-156 is interaction with tRNA; it reads KDQ. The active-site Cysteine persulfide intermediate is the Cys-205. An interaction with tRNA region spans residues 317–318; the sequence is QH.

The protein belongs to the MnmA/TRMU family.

The protein localises to the mitochondrion. The catalysed reaction is 5-taurinomethyluridine(34) in tRNA + S-sulfanyl-L-cysteinyl-[protein] + AH2 + ATP = 5-taurinomethyl-2-thiouridine(34) in tRNA + L-cysteinyl-[protein] + A + AMP + diphosphate + H(+). Its function is as follows. Catalyzes the 2-thiolation of uridine at the wobble position (U34) of mitochondrial tRNA(Lys), tRNA(Glu) and tRNA(Gln). Required for the formation of 5-taurinomethyl-2-thiouridine (tm5s2U) of mitochondrial tRNA(Lys), tRNA(Glu), and tRNA(Gln) at the wobble position. ATP is required to activate the C2 atom of the wobble base. The sequence is that of Mitochondrial tRNA-specific 2-thiouridylase 1 from Drosophila melanogaster (Fruit fly).